Consider the following 341-residue polypeptide: Ribosomal RNA small subunit methyltransferase H (341 aa).

S-adenosyl-L-methionine-binding positions include 47-49, Asp-64, Phe-97, Asp-109, and Gln-116; that span reads GGY.

The protein belongs to the methyltransferase superfamily. RsmH family.

It localises to the cytoplasm. The enzyme catalyses cytidine(1402) in 16S rRNA + S-adenosyl-L-methionine = N(4)-methylcytidine(1402) in 16S rRNA + S-adenosyl-L-homocysteine + H(+). Specifically methylates the N4 position of cytidine in position 1402 (C1402) of 16S rRNA. The sequence is that of Ribosomal RNA small subunit methyltransferase H from Allorhizobium ampelinum (strain ATCC BAA-846 / DSM 112012 / S4) (Agrobacterium vitis (strain S4)).